A 461-amino-acid polypeptide reads, in one-letter code: Interleukin-1 receptor-associated kinase 4 (461 aa).

An N-acetylmethionine modification is found at Met1. A Death domain is found at Arg20–Ala104. Lys34 carries the N6-acetyllysine modification. One can recognise a Protein kinase domain in the interval Ser187–Leu455. ATP-binding positions include Met193–Val201 and Lys214. Catalysis depends on Asp312, which acts as the Proton acceptor. ATP-binding positions include Lys314–Asn317 and Asp330. Residues Thr343 and Thr346 each carry the phosphothreonine modification. At Ser347 the chain carries Phosphoserine.

The protein belongs to the protein kinase superfamily. TKL Ser/Thr protein kinase family. Pelle subfamily. As to quaternary structure, associates with MYD88 and IRAK2 to form a ternary complex called the Myddosome. Once phosphorylated, IRAK4 dissociates from the receptor complex and then associates with the TNF receptor-associated factor 6 (TRAF6), IRAK1, and PELI1; this intermediate complex is required for subsequent NF-kappa-B activation. Direct binding of SMAD6 to PELI1 prevents complex formation and hence negatively regulates IL1R-TLR signaling and eventually NF-kappa-B-mediated gene expression. Interacts with IL1RL1. Interacts (when phosphorylated) with IRAK1. May interact (when phosphorylated) with IRAK3. It depends on Mg(2+) as a cofactor. Phosphorylated.

It localises to the cytoplasm. It catalyses the reaction L-seryl-[protein] + ATP = O-phospho-L-seryl-[protein] + ADP + H(+). It carries out the reaction L-threonyl-[protein] + ATP = O-phospho-L-threonyl-[protein] + ADP + H(+). Its function is as follows. Serine/threonine-protein kinase that plays a critical role in initiating innate immune response against foreign pathogens. Involved in Toll-like receptor (TLR) and IL-1R signaling pathways. Is rapidly recruited by MYD88 to the receptor-signaling complex upon TLR activation to form the Myddosome together with IRAK2. Phosphorylates initially IRAK1, thus stimulating the kinase activity and intensive autophosphorylation of IRAK1. Phosphorylates E3 ubiquitin ligases Pellino proteins (PELI1, PELI2 and PELI3) to promote pellino-mediated polyubiquitination of IRAK1. Then, the ubiquitin-binding domain of IKBKG/NEMO binds to polyubiquitinated IRAK1 bringing together the IRAK1-MAP3K7/TAK1-TRAF6 complex and the NEMO-IKKA-IKKB complex. In turn, MAP3K7/TAK1 activates IKKs (CHUK/IKKA and IKBKB/IKKB) leading to NF-kappa-B nuclear translocation and activation. Alternatively, phosphorylates TIRAP to promote its ubiquitination and subsequent degradation. Phosphorylates NCF1 and regulates NADPH oxidase activation after LPS stimulation suggesting a similar mechanism during microbial infections. This is Interleukin-1 receptor-associated kinase 4 (IRAK4) from Bos taurus (Bovine).